A 59-amino-acid chain; its full sequence is Early protein GP1A (59 aa).

The sequence is that of Early protein GP1A (1A) from Bacillus phage PZA (Bacteriophage PZA).